A 154-amino-acid polypeptide reads, in one-letter code: Phosphopantetheine adenylyltransferase (154 aa).

This sequence belongs to the eukaryotic CoaD family.

The protein resides in the cytoplasm. It carries out the reaction (R)-4'-phosphopantetheine + ATP + H(+) = 3'-dephospho-CoA + diphosphate. It participates in cofactor biosynthesis; coenzyme A biosynthesis. Its function is as follows. Reversibly transfers an adenylyl group from ATP to 4'-phosphopantetheine, yielding dephospho-CoA (dPCoA) and pyrophosphate. This Methanosarcina mazei (strain ATCC BAA-159 / DSM 3647 / Goe1 / Go1 / JCM 11833 / OCM 88) (Methanosarcina frisia) protein is Phosphopantetheine adenylyltransferase.